The chain runs to 291 residues: 4-hydroxy-tetrahydrodipicolinate synthase (291 aa).

T47 contributes to the pyruvate binding site. Catalysis depends on Y134, which acts as the Proton donor/acceptor. K162 (schiff-base intermediate with substrate) is an active-site residue. I205 is a binding site for pyruvate.

This sequence belongs to the DapA family. Homotetramer; dimer of dimers.

Its subcellular location is the cytoplasm. It carries out the reaction L-aspartate 4-semialdehyde + pyruvate = (2S,4S)-4-hydroxy-2,3,4,5-tetrahydrodipicolinate + H2O + H(+). Its pathway is amino-acid biosynthesis; L-lysine biosynthesis via DAP pathway; (S)-tetrahydrodipicolinate from L-aspartate: step 3/4. Functionally, catalyzes the condensation of (S)-aspartate-beta-semialdehyde [(S)-ASA] and pyruvate to 4-hydroxy-tetrahydrodipicolinate (HTPA). The sequence is that of 4-hydroxy-tetrahydrodipicolinate synthase from Methanoculleus marisnigri (strain ATCC 35101 / DSM 1498 / JR1).